A 549-amino-acid chain; its full sequence is Coiled-coil domain-containing protein 102A (549 aa).

Disordered regions lie at residues 1–61 (MSHG…TAPA), 135–195 (LAGA…GSQE), and 207–248 (PEEP…EEDA). Phosphoserine is present on residues Ser12, Ser26, and Ser28. Residues 37–55 (SLPPTPPSGTPSPGPPPSL) show a composition bias toward pro residues. Positions 69–160 (ESREELRLRE…ARGRELARLR (92 aa)) form a coiled coil. Basic and acidic residues-rich tracts occupy residues 135–158 (LAGARRERQEAQGECEARGRELAR) and 165–187 (AADKTHDGPEPEREQEPVRDIGA). Coiled-coil stretches lie at residues 263–398 (KVLL…NASA) and 426–517 (KLKK…NAPL). 2 disordered regions span residues 472–496 (ELDEAHNQARKLQRSLDEQTEQSEN) and 509–549 (RRQQ…IQVA). The span at 530-549 (EAGDGASDLDEDEDLQIQVA) shows a compositional bias: acidic residues. Ser536 is modified (phosphoserine).

This is Coiled-coil domain-containing protein 102A (Ccdc102a) from Mus musculus (Mouse).